We begin with the raw amino-acid sequence, 745 residues long: Centromere protein I (745 aa).

Over residues 1-27 (MATPRLTRNSQQQNRISQGSNSRQTTL) the composition is skewed to polar residues. The tract at residues 1-58 (MATPRLTRNSQQQNRISQGSNSRQTTLLDWKVKDKAGNSKSVLEESSSLEDSNHADDQ) is disordered. The span at 39–50 (SKSVLEESSSLE) shows a compositional bias: low complexity.

It belongs to the CENP-I/CTF3 family. Component of the CENPA-CAD complex, composed of CENPI, CENPK, CENPL, CENPO, CENPP, CENPQ, CENPR and CENPS. The CENPA-CAD complex interacts with the CENPA-NAC complex, at least composed of CENPA, CENPC, CENPH, CENPM, CENPN, CENPT and CENPU. Interacts with SENP6. Post-translationally, sumoylated. Sumoylated form can be polyubiquitinated by RNF4, leading to its degradation. Desumoylation by SENP6 prevents its degradation. As to expression, highly expressed in testis, ovary and spleen. A much lower mRNA level is found in brain and lung, and no expression is detected in liver, kidney, heart, muscle, pituitary gland, prostate, epididymis and seminal vesicle.

The protein localises to the nucleus. It localises to the chromosome. The protein resides in the centromere. Functionally, component of the CENPA-CAD (nucleosome distal) complex, a complex recruited to centromeres which is involved in assembly of kinetochore proteins, mitotic progression and chromosome segregation. May be involved in incorporation of newly synthesized CENPA into centromeres via its interaction with the CENPA-NAC complex. Required for the localization of CENPF, MAD1L1 and MAD2 (MAD2L1 or MAD2L2) to kinetochores. Involved in the response of gonadal tissues to follicle-stimulating hormone. This Rattus norvegicus (Rat) protein is Centromere protein I (Cenpi).